A 448-amino-acid polypeptide reads, in one-letter code: Tumor necrosis factor receptor superfamily member EDAR (448 aa).

The N-terminal stretch at 1-26 (MAHVGDCKWMSWLPVLVVSLMCSAKA) is a signal peptide. Topologically, residues 27 to 187 (EDSNCGENEY…LSGQGHLATA (161 aa)) are extracellular. TNFR-Cys repeat units follow at residues 30 to 71 (NCGE…DYGC), 73 to 113 (PCPA…DAEC), and 115 to 150 (PCLP…ECVG). 6 cysteine pairs are disulfide-bonded: cysteine 31–cysteine 44, cysteine 47–cysteine 60, cysteine 50–cysteine 71, cysteine 74–cysteine 87, cysteine 93–cysteine 113, and cysteine 135–cysteine 148. Asparagine 38 carries an N-linked (GlcNAc...) asparagine glycan. Residues 188–208 (LIIAMSTIFIMAIAIVLIIMF) traverse the membrane as a helical segment. At 209–448 (YIMKTKPSAP…PPASPPPAAS (240 aa)) the chain is on the cytoplasmic side. Residues 220 to 229 (CCSSPPGKSA) are compositionally biased toward low complexity. Positions 220 to 297 (CCSSPPGKSA…EEPAPDKQGS (78 aa)) are disordered. Polar residues predominate over residues 258-283 (LTATPTKTPKSENDASSENEQLLSRS). The region spanning 358–431 (RMLSSTYNSE…DAVESLCADI (74 aa)) is the Death domain.

Binds to EDARADD. Associates with TRAF1, TRAF2, TRAF3 and NIK.

The protein resides in the membrane. Receptor for EDA isoform TAA, but not for EDA isoform TA-2. May mediate the activation of NF-kappa-B and JNK. May promote caspase-independent cell death. This Mus musculus (Mouse) protein is Tumor necrosis factor receptor superfamily member EDAR (Edar).